We begin with the raw amino-acid sequence, 432 residues long: Cysteine desulfurase, mitosomal (432 aa).

Residues 102–103 (AT), Gln-212, and 232–234 (CAH) contribute to the pyridoxal 5'-phosphate site. Position 235 is an N6-(pyridoxal phosphate)lysine (Lys-235). Thr-272 contributes to the pyridoxal 5'-phosphate binding site. The active-site Cysteine persulfide intermediate is the Cys-357. Cys-357 contacts [2Fe-2S] cluster.

Belongs to the class-V pyridoxal-phosphate-dependent aminotransferase family. NifS/IscS subfamily. Requires pyridoxal 5'-phosphate as cofactor.

It localises to the mitosome. The enzyme catalyses (sulfur carrier)-H + L-cysteine = (sulfur carrier)-SH + L-alanine. Catalyzes the removal of elemental sulfur from cysteine to produce alanine. It supplies the inorganic sulfur for iron-sulfur (Fe-S) clusters in mitosomes. In Encephalitozoon cuniculi (strain GB-M1) (Microsporidian parasite), this protein is Cysteine desulfurase, mitosomal.